The sequence spans 224 residues: ATP-dependent dethiobiotin synthetase BioD (224 aa).

An ATP-binding site is contributed by 12–17; that stretch reads EVGKTV. Threonine 16 contributes to the Mg(2+) binding site. Lysine 34 is a catalytic residue. Threonine 38 provides a ligand contact to substrate. ATP contacts are provided by residues aspartate 47, 106-109, 166-167, and 196-198; these read EGAG, GS, and PEG. Mg(2+) is bound by residues aspartate 47 and glutamate 106.

Belongs to the dethiobiotin synthetase family. As to quaternary structure, homodimer. Mg(2+) is required as a cofactor.

It is found in the cytoplasm. The catalysed reaction is (7R,8S)-7,8-diammoniononanoate + CO2 + ATP = (4R,5S)-dethiobiotin + ADP + phosphate + 3 H(+). The protein operates within cofactor biosynthesis; biotin biosynthesis; biotin from 7,8-diaminononanoate: step 1/2. Catalyzes a mechanistically unusual reaction, the ATP-dependent insertion of CO2 between the N7 and N8 nitrogen atoms of 7,8-diaminopelargonic acid (DAPA, also called 7,8-diammoniononanoate) to form a ureido ring. The sequence is that of ATP-dependent dethiobiotin synthetase BioD from Saccharopolyspora erythraea (strain ATCC 11635 / DSM 40517 / JCM 4748 / NBRC 13426 / NCIMB 8594 / NRRL 2338).